We begin with the raw amino-acid sequence, 229 residues long: Ribonuclease 3 (229 aa).

Residues 4–133 form the RNase III domain; it reads WEELQESVGF…FIGALYLDNG (130 aa). A Mg(2+)-binding site is contributed by Glu46. The active site involves Asp50. The Mg(2+) site is built by Asp119 and Glu122. The active site involves Glu122. Residues 159 to 228 form the DRBM domain; it reads DYKTQLQEIV…AQFAINQLTH (70 aa).

It belongs to the ribonuclease III family. In terms of assembly, homodimer. Mg(2+) serves as cofactor.

It is found in the cytoplasm. It carries out the reaction Endonucleolytic cleavage to 5'-phosphomonoester.. Digests double-stranded RNA. Involved in the processing of primary rRNA transcript to yield the immediate precursors to the large and small rRNAs (23S and 16S). Processes some mRNAs, and tRNAs when they are encoded in the rRNA operon. Processes pre-crRNA and tracrRNA of type II CRISPR loci if present in the organism. In Listeria welshimeri serovar 6b (strain ATCC 35897 / DSM 20650 / CCUG 15529 / CIP 8149 / NCTC 11857 / SLCC 5334 / V8), this protein is Ribonuclease 3.